Here is a 79-residue protein sequence, read N- to C-terminus: Antimicrobial peptide UyCT1 (79 aa).

A signal peptide spans 1–23 (MKTQLAFLAITVILMQLFAQTEA). Isoleucine 37 carries the isoleucine amide modification. The propeptide occupies 41–79 (GLRNVDQIADLFDSGLSDADDLFDSGLSDADAKFMKMFM).

The protein belongs to the non-disulfide-bridged peptide (NDBP) superfamily. Short antimicrobial peptide (group 4) family. In terms of tissue distribution, expressed by the venom gland.

It is found in the secreted. The protein resides in the target cell membrane. Functionally, inhibits the growth of Gram-positive (S.aureus, MIC=15 uM) and Gram-negative bacteria (E.coli, MIC=10 uM and P.aeruginosa, MIC=10 uM). It also shows 26% of hemolysis when 15 uM are tested (81% at 50 uM). In terms of biological role, inhibits the growth of Gram-negative bacteria (E.coli, MIC=25 uM and P.aeruginosa, MIC=40 uM). It also shows 7% of hemolysis when 50 uM are tested. Does not show activity against the Gram-positive bacteria S.aureus. The polypeptide is Antimicrobial peptide UyCT1 (Urodacus yaschenkoi (Inland robust scorpion)).